We begin with the raw amino-acid sequence, 436 residues long: Voltage-gated potassium channel regulatory subunit KCNG3 (436 aa).

At 1-168 (MTFGRSGAAS…RTFEEPTSSL (168 aa)) the chain is on the cytoplasmic side. The helical transmembrane segment at 169–190 (AAQILASVSVVFVIVSMVVLCA) threads the bilayer. The Extracellular segment spans residues 191–220 (STLPDWRNAAADNRSLDDRSRYSAGPGREP). A helical membrane pass occupies residues 221–242 (SGIIEAICIGWFTAECIVRFIV). The Cytoplasmic portion of the chain corresponds to 243–253 (SKNKCEFVKRP). A helical membrane pass occupies residues 254-274 (LNIIDLLAITPYYISVLMTVF). The Extracellular segment spans residues 275 to 284 (TGENSQLQRA). A helical; Voltage-sensor transmembrane segment spans residues 285-305 (GVTLRVLRMMRIFWVIKLARH). Residues 306 to 320 (FIGLQTLGLTLKRCY) are Cytoplasmic-facing. Residues 321–342 (REMVMLLVFICVAMAIFSALSQ) form a helical membrane-spanning segment. The Extracellular portion of the chain corresponds to 343 to 360 (LLEHGLDLETSNKDFTSI). Positions 361-372 (PAACWWVIISMT) form an intramembrane region, helical. Positions 373–378 (TVGYGD) match the Selectivity filter motif. An intramembrane segment occupies 373-380 (TVGYGDMY). At 381-387 (PITVPGR) the chain is on the extracellular side. Residues 388 to 416 (ILGGVCVVSGIVLLALPITFIYHSFVQCY) form a helical membrane-spanning segment. The Cytoplasmic portion of the chain corresponds to 417 to 436 (HELKFRSARYSRSLSTEFLN).

The protein belongs to the potassium channel family. G (TC 1.A.1.2) subfamily. Kv6.3/KCNG3 sub-subfamily. In terms of assembly, heterotetramer with KCNB1. Does not form homomultimers. As to expression, expressed in the brain, liver, testis, small intestine, colon, thymus and adrenal gland.

It is found in the cell membrane. It localises to the cytoplasm. Its function is as follows. Regulatory subunit of the voltage-gated potassium (Kv) channel which, when coassembled with KCNB1, modulates the kinetics parameters of the heterotetrameric channel namely the inactivation and deactivation rate. Potassium channel subunit that does not form functional channels by itself. Reduces the deactivation rate. Moderately accelerates activation. The chain is Voltage-gated potassium channel regulatory subunit KCNG3 from Homo sapiens (Human).